The sequence spans 383 residues: 4-hydroxy-3-methylbut-2-en-1-yl diphosphate synthase (flavodoxin) (383 aa).

[4Fe-4S] cluster contacts are provided by C275, C278, C310, and E317.

It belongs to the IspG family. [4Fe-4S] cluster serves as cofactor.

The enzyme catalyses (2E)-4-hydroxy-3-methylbut-2-enyl diphosphate + oxidized [flavodoxin] + H2O + 2 H(+) = 2-C-methyl-D-erythritol 2,4-cyclic diphosphate + reduced [flavodoxin]. Its pathway is isoprenoid biosynthesis; isopentenyl diphosphate biosynthesis via DXP pathway; isopentenyl diphosphate from 1-deoxy-D-xylulose 5-phosphate: step 5/6. In terms of biological role, converts 2C-methyl-D-erythritol 2,4-cyclodiphosphate (ME-2,4cPP) into 1-hydroxy-2-methyl-2-(E)-butenyl 4-diphosphate. The polypeptide is 4-hydroxy-3-methylbut-2-en-1-yl diphosphate synthase (flavodoxin) (Dinoroseobacter shibae (strain DSM 16493 / NCIMB 14021 / DFL 12)).